The following is a 1059-amino-acid chain: Ubiquitin carboxyl-terminal hydrolase 36 (1059 aa).

Disordered regions lie at residues 24-49 (VGNGSRAADEAKKTGGGGGDDSDSEM) and 94-148 (SNNN…KPKR). The segment covering 94–123 (SNNNNSSSCNGSNFGNSKVVGANGHDNGNN) has biased composition (low complexity). Polar residues predominate over residues 130–139 (QSESTQSGPS). The region spanning 171–479 (TGMINVGNTC…NAYIMFYELD (309 aa)) is the USP domain. Cys-180 serves as the catalytic Nucleophile. The active-site Proton acceptor is the His-438. Residues 505–673 (TVSSSSPTHT…KTPLKSSVKT (169 aa)) are disordered. Ser-508 and Ser-510 each carry phosphoserine. The span at 528–539 (GYSNGHATGSSN) shows a compositional bias: polar residues. Composition is skewed to low complexity over residues 540–560 (AQKTAIQFKQQQQHPQQNGLQ), 592–611 (NGNKSSSSSASNSNHNKSVN), and 633–647 (ATATATATATARPTA). Positions 655 to 664 (MTEDSSDKPK) are enriched in basic and acidic residues. 2 positions are modified to phosphothreonine: Thr-673 and Thr-682. Disordered stretches follow at residues 687–893 (LVPY…EAST), 926–998 (KELV…RYHN), and 1012–1059 (KYNR…QSSS). Ser-692 and Ser-694 each carry phosphoserine. 2 stretches are compositionally biased toward low complexity: residues 729–739 (TKTNGGSLTNG) and 752–765 (SSSSSLASASASAA). Ser-766 carries the post-translational modification Phosphoserine. A compositionally biased stretch (acidic residues) spans 766-776 (SDDEDADEEEE). Polar residues predominate over residues 779-795 (KLTNGWQPQKQSQSLTQ). A compositionally biased stretch (pro residues) spans 799–808 (PPSPKTPPSP). At Ser-801 the chain carries Phosphoserine. Thr-804 carries the phosphothreonine modification. Residue Ser-807 is modified to Phosphoserine. Acidic residues predominate over residues 825 to 839 (DNEDEDDDDDEDEEE). Composition is skewed to polar residues over residues 842–862 (QVVSTPSKNPRNPFAKSSTTP) and 876–893 (KSQQQPRVGNGYQSEAST). Thr-846 and Thr-861 each carry phosphothreonine. A compositionally biased stretch (basic and acidic residues) spans 926–940 (KELVAEAREQRQHDH). The segment covering 1048–1059 (QQQQQQSQQSSS) has biased composition (low complexity).

It belongs to the peptidase C19 family. As to quaternary structure, interacts with atms/PAF1, but not with CycT.

It localises to the nucleus. Its subcellular location is the nucleolus. It catalyses the reaction Thiol-dependent hydrolysis of ester, thioester, amide, peptide and isopeptide bonds formed by the C-terminal Gly of ubiquitin (a 76-residue protein attached to proteins as an intracellular targeting signal).. In terms of biological role, required for maintaining multiple types of adult stem cells, including male and female germline, epithelial follicle cell and intestinal stem cells. May function as a transcriptional repressor by continually deubiquiting histone H2B at the promoters of genes critical for cellular differentiation, thereby preventing histone H3 'Lys-4' trimethylation (H3K4). Controls selective autophagy activation by ubiquitinated proteins. The polypeptide is Ubiquitin carboxyl-terminal hydrolase 36 (Usp36) (Drosophila pseudoobscura pseudoobscura (Fruit fly)).